Here is a 338-residue protein sequence, read N- to C-terminus: Methionine import ATP-binding protein MetN 1 (338 aa).

The region spanning 2-241 is the ABC transporter domain; it reads IEVRSVTKRF…PHSELGVGLL (240 aa). Position 38-45 (38-45) interacts with ATP; that stretch reads GQSGAGKT.

The protein belongs to the ABC transporter superfamily. Methionine importer (TC 3.A.1.24) family. The complex is composed of two ATP-binding proteins (MetN), two transmembrane proteins (MetI) and a solute-binding protein (MetQ).

Its subcellular location is the cell membrane. It carries out the reaction L-methionine(out) + ATP + H2O = L-methionine(in) + ADP + phosphate + H(+). It catalyses the reaction D-methionine(out) + ATP + H2O = D-methionine(in) + ADP + phosphate + H(+). Its function is as follows. Part of the ABC transporter complex MetNIQ involved in methionine import. Responsible for energy coupling to the transport system. This chain is Methionine import ATP-binding protein MetN 1, found in Rhodococcus jostii (strain RHA1).